We begin with the raw amino-acid sequence, 221 residues long: Urease accessory protein UreG (221 aa).

Glycine 19–threonine 26 contributes to the GTP binding site.

This sequence belongs to the SIMIBI class G3E GTPase family. UreG subfamily. In terms of assembly, homodimer. UreD, UreF and UreG form a complex that acts as a GTP-hydrolysis-dependent molecular chaperone, activating the urease apoprotein by helping to assemble the nickel containing metallocenter of UreC. The UreE protein probably delivers the nickel.

It localises to the cytoplasm. Facilitates the functional incorporation of the urease nickel metallocenter. This process requires GTP hydrolysis, probably effectuated by UreG. The protein is Urease accessory protein UreG of Yersinia enterocolitica serotype O:8 / biotype 1B (strain NCTC 13174 / 8081).